Consider the following 397-residue polypeptide: Elongation factor Tu (397 aa).

The region spanning 10-207 (KPHCNIGTIG…AVDEYIPQPE (198 aa)) is the tr-type G domain. A G1 region spans residues 19–26 (GHVDHGKT). Residue 19–26 (GHVDHGKT) participates in GTP binding. Residue Thr26 coordinates Mg(2+). Positions 61–65 (GITIS) are G2. Residues 82–85 (DCPG) form a G3 region. GTP-binding positions include 82 to 86 (DCPGH) and 137 to 140 (NKVD). A G4 region spans residues 137 to 140 (NKVD). A G5 region spans residues 175–177 (SAL).

Belongs to the TRAFAC class translation factor GTPase superfamily. Classic translation factor GTPase family. EF-Tu/EF-1A subfamily. In terms of assembly, monomer.

The protein localises to the cytoplasm. It carries out the reaction GTP + H2O = GDP + phosphate + H(+). Functionally, GTP hydrolase that promotes the GTP-dependent binding of aminoacyl-tRNA to the A-site of ribosomes during protein biosynthesis. The sequence is that of Elongation factor Tu from Zymomonas mobilis subsp. mobilis (strain ATCC 31821 / ZM4 / CP4).